Reading from the N-terminus, the 335-residue chain is Anthranilate phosphoribosyltransferase (335 aa).

5-phospho-alpha-D-ribose 1-diphosphate contacts are provided by residues glycine 79, 82–83, serine 87, 89–92, 107–115, and serine 119; these read GD, NIST, and KHGNRSITS. Glycine 79 provides a ligand contact to anthranilate. Serine 91 lines the Mg(2+) pocket. Residue asparagine 110 coordinates anthranilate. Arginine 165 serves as a coordination point for anthranilate. Mg(2+)-binding residues include aspartate 224 and glutamate 225.

It belongs to the anthranilate phosphoribosyltransferase family. As to quaternary structure, homodimer. The cofactor is Mg(2+).

The catalysed reaction is N-(5-phospho-beta-D-ribosyl)anthranilate + diphosphate = 5-phospho-alpha-D-ribose 1-diphosphate + anthranilate. It functions in the pathway amino-acid biosynthesis; L-tryptophan biosynthesis; L-tryptophan from chorismate: step 2/5. Functionally, catalyzes the transfer of the phosphoribosyl group of 5-phosphorylribose-1-pyrophosphate (PRPP) to anthranilate to yield N-(5'-phosphoribosyl)-anthranilate (PRA). The chain is Anthranilate phosphoribosyltransferase from Lactococcus lactis subsp. cremoris (strain SK11).